A 346-amino-acid polypeptide reads, in one-letter code: Uroporphyrinogen decarboxylase (346 aa).

Residues 26 to 30, aspartate 76, tyrosine 153, serine 208, and histidine 323 each bind substrate; that span reads RQAGR.

The protein belongs to the uroporphyrinogen decarboxylase family. Homodimer.

It localises to the cytoplasm. It carries out the reaction uroporphyrinogen III + 4 H(+) = coproporphyrinogen III + 4 CO2. Its pathway is porphyrin-containing compound metabolism; protoporphyrin-IX biosynthesis; coproporphyrinogen-III from 5-aminolevulinate: step 4/4. Its function is as follows. Catalyzes the decarboxylation of four acetate groups of uroporphyrinogen-III to yield coproporphyrinogen-III. In Prochlorococcus marinus (strain MIT 9215), this protein is Uroporphyrinogen decarboxylase.